The sequence spans 513 residues: Membrane protein (513 aa).

4 repeat units span residues 9-11 (PSA), 12-14 (PSA), 15-17 (PSA), and 18-20 (PSA). The segment at 9–20 (PSAPSAPSAPSA) is 4 X 3 AA tandem repeats of P-S-A. The next 14 membrane-spanning stretches (helical) occupy residues 32–52 (LTLHWGLFAAVAALLVVLAIP), 56–76 (GLTVAGQRMLAILAFAIVVWI), 79–99 (AVSYETSAIMITSLMAGLIGF), 126–146 (TALALVAAALFISAAMTVTGL), 165–185 (ILIGTIAVTIALSLVVPSATA), 208–228 (NIAAGIMITVAQATSIWNVGI), 254–274 (QWLIAGAPWAIAMSVVLYFLV), 309–329 (LAAVSLGLLLFWATEGKLHSF), 332–352 (ATVTFVGLVILMMPRIGVMDW), 360–380 (PWGTLIVFGVGISLGTALLST), 400–420 (GALLVFAILSAFLILIHLGFA), 422–442 (ATALTAALLPILIAVLQTLPG), 447–467 (VGMTMLLGFTVSFGFILPINA), and 487–507 (IGIPVTIIGYAMMLLFAATYW).

Belongs to the SLC13A/DASS transporter (TC 2.A.47) family. DIT1 subfamily.

It localises to the cell membrane. The protein is Membrane protein of Cupriavidus necator (strain ATCC 17699 / DSM 428 / KCTC 22496 / NCIMB 10442 / H16 / Stanier 337) (Ralstonia eutropha).